The following is a 111-amino-acid chain: Ribosome-binding factor A (111 aa).

The protein belongs to the RbfA family. Monomer. Binds 30S ribosomal subunits, but not 50S ribosomal subunits or 70S ribosomes.

Its subcellular location is the cytoplasm. One of several proteins that assist in the late maturation steps of the functional core of the 30S ribosomal subunit. Associates with free 30S ribosomal subunits (but not with 30S subunits that are part of 70S ribosomes or polysomes). Required for efficient processing of 16S rRNA. May interact with the 5'-terminal helix region of 16S rRNA. This chain is Ribosome-binding factor A, found in Helicobacter pylori (strain Shi470).